The sequence spans 409 residues: DNA primase DnaG (409 aa).

Residues 175 to 261 (DAIIVVEGRA…EVEELTRKEI (87 aa)) enclose the Toprim domain. Residues glutamate 181, aspartate 223, and aspartate 225 each coordinate Mg(2+). The segment covering 280–289 (ERPKDKEREK) has biased composition (basic and acidic residues). A disordered region spans residues 280–322 (ERPKDKEREKGKKPKPKKRPERRGRPRKKKARPKRGPQERRLL). The segment covering 290-314 (GKKPKPKKRPERRGRPRKKKARPKR) has biased composition (basic residues).

It belongs to the archaeal DnaG primase family. Forms a ternary complex with MCM helicase and DNA. Component of the archaeal exosome complex. It depends on Mg(2+) as a cofactor.

It catalyses the reaction ssDNA + n NTP = ssDNA/pppN(pN)n-1 hybrid + (n-1) diphosphate.. RNA polymerase that catalyzes the synthesis of short RNA molecules used as primers for DNA polymerase during DNA replication. Also part of the exosome, which is a complex involved in RNA degradation. Acts as a poly(A)-binding protein that enhances the interaction between heteromeric, adenine-rich transcripts and the exosome. This is DNA primase DnaG from Methanopyrus kandleri (strain AV19 / DSM 6324 / JCM 9639 / NBRC 100938).